The sequence spans 413 residues: MGSSEPLPIVDSDKRRKKKRKTRATDSLPGKFEDVYQLTSELLGEGAYAKVQGAVSLQSGKEYAVKIIEKQAGHSRSRVFREVETLYQCQGNRNILELIEFFEDDTRFYLVFEKLQGGSILAHIQKRKHFNELEASRVVRDVATALDFLHTKGIAHRDLKPENILCESPEKVSPVKICDFDLGSGVKLNNSCTPITTPELTTPCGSAEYMAPEVVEVFRDEATFYDKRCDLWSLGVVLYIMLSGYPPFVGHCGADCGWDRGEVCRMCQNKLFESIQEGKYEFPDKDWAHISTEAKDLISKLLVRDAKQRLSAAQVLQHPWVQGQAPERGLPTPQVLQRNSSTMDLTLFAAEAIALNRQLSQHEENELAEEHEALAEGLCSMKLSPPSKSRLARRRALAHAGREANSCSTPAGL.

Residues M1–D26 form a disordered region. T22 is subject to Phosphothreonine; by PAK2. S27 is subject to Phosphoserine; by PAK2. The Protein kinase domain maps to Q37 to V321. ATP-binding positions include L43–V51 and K66. D158 acts as the Proton acceptor in catalysis. Residues S168 and S173 each carry the phosphoserine modification. T197, T202, and T332 each carry phosphothreonine.

This sequence belongs to the protein kinase superfamily. CAMK Ser/Thr protein kinase family. Interacts with the C-terminal regions of EIF4G1 and EIF4G2. Also binds to dephosphorylated ERK1 and ERK2, and to the p38 kinases. Mg(2+) serves as cofactor. In terms of processing, dual phosphorylation of Thr-197 and Thr-202 activates the kinase. Phosphorylation of Thr-332 activates the kinase. MAPK3/ERK1 is one of the kinases which activate MKNK1/MNK1. Phosphorylation by PAK2 leads to a reduced phosphorylation of EIF4G1.

The catalysed reaction is L-seryl-[protein] + ATP = O-phospho-L-seryl-[protein] + ADP + H(+). The enzyme catalyses L-threonyl-[protein] + ATP = O-phospho-L-threonyl-[protein] + ADP + H(+). Its activity is regulated as follows. Phosphorylated and activated by the p38 kinases and kinases in the Erk pathway. In terms of biological role, may play a role in the response to environmental stress and cytokines. Appears to regulate translation by phosphorylating EIF4E, thus increasing the affinity of this protein for the 7-methylguanosine-containing mRNA cap. In Rattus norvegicus (Rat), this protein is MAP kinase-interacting serine/threonine-protein kinase 1 (Mknk1).